A 63-amino-acid polypeptide reads, in one-letter code: ATP synthase F(0) complex subunit 8 (63 aa).

The chain crosses the membrane as a helical span at residues 8-24; sequence TWFLTILSVMLTLFTLL. An N6-acetyllysine modification is found at K57.

The protein belongs to the ATPase protein 8 family. As to quaternary structure, component of the ATP synthase complex composed at least of ATP5F1A/subunit alpha, ATP5F1B/subunit beta, ATP5MC1/subunit c (homooctomer), MT-ATP6/subunit a, MT-ATP8/subunit 8, ATP5ME/subunit e, ATP5MF/subunit f, ATP5MG/subunit g, ATP5MK/subunit k, ATP5MJ/subunit j, ATP5F1C/subunit gamma, ATP5F1D/subunit delta, ATP5F1E/subunit epsilon, ATP5PF/subunit F6, ATP5PB/subunit b, ATP5PD/subunit d, ATP5PO/subunit OSCP. ATP synthase complex consists of a soluble F(1) head domain (subunits alpha(3) and beta(3)) - the catalytic core - and a membrane F(0) domain - the membrane proton channel (subunits c, a, 8, e, f, g, k and j). These two domains are linked by a central stalk (subunits gamma, delta, and epsilon) rotating inside the F1 region and a stationary peripheral stalk (subunits F6, b, d, and OSCP). Interacts with PRICKLE3.

Its subcellular location is the mitochondrion membrane. Subunit 8, of the mitochondrial membrane ATP synthase complex (F(1)F(0) ATP synthase or Complex V) that produces ATP from ADP in the presence of a proton gradient across the membrane which is generated by electron transport complexes of the respiratory chain. ATP synthase complex consist of a soluble F(1) head domain - the catalytic core - and a membrane F(1) domain - the membrane proton channel. These two domains are linked by a central stalk rotating inside the F(1) region and a stationary peripheral stalk. During catalysis, ATP synthesis in the catalytic domain of F(1) is coupled via a rotary mechanism of the central stalk subunits to proton translocation. In vivo, can only synthesize ATP although its ATP hydrolase activity can be activated artificially in vitro. Part of the complex F(0) domain. This Physeter macrocephalus (Sperm whale) protein is ATP synthase F(0) complex subunit 8.